The chain runs to 142 residues: Large ribosomal subunit protein uL11 (142 aa).

Belongs to the universal ribosomal protein uL11 family. Part of the ribosomal stalk of the 50S ribosomal subunit. Interacts with L10 and the large rRNA to form the base of the stalk. L10 forms an elongated spine to which L12 dimers bind in a sequential fashion forming a multimeric L10(L12)X complex. One or more lysine residues are methylated.

Its function is as follows. Forms part of the ribosomal stalk which helps the ribosome interact with GTP-bound translation factors. The polypeptide is Large ribosomal subunit protein uL11 (Klebsiella pneumoniae subsp. pneumoniae (strain ATCC 700721 / MGH 78578)).